The primary structure comprises 307 residues: Dihydroorotate dehydrogenase A (fumarate) (307 aa).

FMN contacts are provided by residues Ser-21 and 46-47 (KT). Substrate contacts are provided by residues Lys-46, 70–74 (NSVGL), and Asn-130. Residue Asn-130 coordinates FMN. The active-site Nucleophile is Cys-133. Residues Lys-168 and Ile-194 each contribute to the FMN site. 195-196 (NT) is a substrate binding site. FMN is bound by residues Gly-220, 246-247 (GG), and 268-269 (GS).

This sequence belongs to the dihydroorotate dehydrogenase family. Type 1 subfamily. As to quaternary structure, homodimer. It depends on FMN as a cofactor.

Its subcellular location is the cytoplasm. It catalyses the reaction (S)-dihydroorotate + fumarate = orotate + succinate. It functions in the pathway pyrimidine metabolism; UMP biosynthesis via de novo pathway. Functionally, catalyzes the conversion of dihydroorotate to orotate with fumarate as the electron acceptor. The chain is Dihydroorotate dehydrogenase A (fumarate) (pyrD) from Lactobacillus delbrueckii subsp. bulgaricus (strain ATCC 11842 / DSM 20081 / BCRC 10696 / JCM 1002 / NBRC 13953 / NCIMB 11778 / NCTC 12712 / WDCM 00102 / Lb 14).